Consider the following 1253-residue polypeptide: Methionine synthase (1253 aa).

Residues 6–326 enclose the Hcy-binding domain; it reads QDEIEAILRK…DHIREIAEAV (321 aa). Zn(2+) contacts are provided by Cys-248, Cys-311, and Cys-312. The Pterin-binding domain occupies 359 to 620; it reads FVNIGERCNV…IHKDLLQLCE (262 aa). (6S)-5,6,7,8-tetrahydrofolate is bound by residues 370–372, Asp-437, Asn-458, Asp-525, Asn-567, Arg-573, and Arg-579; that span reads GSR. The 98-residue stretch at 650–747 folds into the B12-binding N-terminal domain; the sequence is QTDEWRNGSI…FMEKEREEAR (98 aa). Residues Glu-697, 770-774, His-773, Ser-818, Thr-822, and Ala-874 contribute to the methylcob(III)alamin site; that span reads GDVHD. The 136-residue stretch at 760–895 folds into the B12-binding domain; it reads QGTIVLATVK…DENLRDDYFE (136 aa). In terms of domain architecture, AdoMet activation spans 911 to 1253; sequence SLKERKYVPL…LGPILGYDTD (343 aa). Residues Asp-962, Arg-1160, and 1215-1216 contribute to the S-adenosyl-L-methionine site; that span reads YF. Thr-1252 is modified (phosphothreonine).

Belongs to the vitamin-B12 dependent methionine synthase family. In terms of assembly, monomer. Dimer. Forms a multiprotein complex with MMACHC, MMADHC and MTRR. The cofactor is methylcob(III)alamin. Requires Zn(2+) as cofactor.

Its subcellular location is the cytoplasm. It catalyses the reaction (6S)-5-methyl-5,6,7,8-tetrahydrofolate + L-homocysteine = (6S)-5,6,7,8-tetrahydrofolate + L-methionine. Its pathway is amino-acid biosynthesis; L-methionine biosynthesis via de novo pathway; L-methionine from L-homocysteine (MetH route): step 1/1. In terms of biological role, catalyzes the transfer of a methyl group from methylcob(III)alamin (MeCbl) to homocysteine, yielding enzyme-bound cob(I)alamin and methionine in the cytosol. MeCbl is an active form of cobalamin (vitamin B12) used as a cofactor for methionine biosynthesis. Cob(I)alamin form is regenerated to MeCbl by a transfer of a methyl group from 5-methyltetrahydrofolate. The processing of cobalamin in the cytosol occurs in a multiprotein complex composed of at least MMACHC, MMADHC, MTRR (methionine synthase reductase) and MTR which may contribute to shuttle safely and efficiently cobalamin towards MTR in order to produce methionine. In Mus musculus (Mouse), this protein is Methionine synthase.